The primary structure comprises 451 residues: tRNA-2-methylthio-N(6)-dimethylallyladenosine synthase (451 aa).

The MTTase N-terminal domain maps to 5–121 (RQYHITTFGC…LQDLLEQVEG (117 aa)). 6 residues coordinate [4Fe-4S] cluster: cysteine 14, cysteine 50, cysteine 84, cysteine 156, cysteine 160, and cysteine 163. Positions 142–379 (RDSTVTAWVN…NHLVAQKAAE (238 aa)) constitute a Radical SAM core domain. One can recognise a TRAM domain in the interval 382–446 (QRYAGRIEEV…AFSLTGEAVE (65 aa)).

This sequence belongs to the methylthiotransferase family. MiaB subfamily. As to quaternary structure, monomer. It depends on [4Fe-4S] cluster as a cofactor.

It is found in the cytoplasm. It catalyses the reaction N(6)-dimethylallyladenosine(37) in tRNA + (sulfur carrier)-SH + AH2 + 2 S-adenosyl-L-methionine = 2-methylsulfanyl-N(6)-dimethylallyladenosine(37) in tRNA + (sulfur carrier)-H + 5'-deoxyadenosine + L-methionine + A + S-adenosyl-L-homocysteine + 2 H(+). In terms of biological role, catalyzes the methylthiolation of N6-(dimethylallyl)adenosine (i(6)A), leading to the formation of 2-methylthio-N6-(dimethylallyl)adenosine (ms(2)i(6)A) at position 37 in tRNAs that read codons beginning with uridine. This Picosynechococcus sp. (strain ATCC 27264 / PCC 7002 / PR-6) (Agmenellum quadruplicatum) protein is tRNA-2-methylthio-N(6)-dimethylallyladenosine synthase.